We begin with the raw amino-acid sequence, 170 residues long: Photosystem II extrinsic protein V (170 aa).

An N-terminal signal peptide occupies residues 1 to 33 (MVSVFSSLRQSFKGLLVLVPVLIGLAFISPAEA). Residues Cys70, Cys73, His74, and Met137 each coordinate heme c.

Belongs to the cytochrome c family. PsbV subfamily. PSII is composed of 1 copy each of membrane proteins PsbA, PsbB, PsbC, PsbD, PsbE, PsbF, PsbH, PsbI, PsbJ, PsbK, PsbL, PsbM, PsbT, PsbX, PsbY, PsbZ, Psb30/Ycf12, peripheral proteins PsbO, CyanoQ (PsbQ), PsbU, PsbV and a large number of cofactors. It forms dimeric complexes. Heme c is required as a cofactor.

Its subcellular location is the cellular thylakoid membrane. Functionally, one of the extrinsic, lumenal subunits of photosystem II (PSII). PSII is a light-driven water plastoquinone oxidoreductase, using light energy to abstract electrons from H(2)O, generating a proton gradient subsequently used for ATP formation. The extrinsic proteins stabilize the structure of photosystem II oxygen-evolving complex (OEC), the ion environment of oxygen evolution and protect the OEC against heat-induced inactivation. Low-potential cytochrome c that plays a role in the OEC of PSII. The sequence is that of Photosystem II extrinsic protein V from Synechococcus sp. (strain CC9902).